The sequence spans 321 residues: MNRPERLQPGVKLRDADKVSRIPVKIVPSERDTMLRKPDWLRVKLPASNQRILEIKQALRKNGLHSVCEEASCPNLAECFNHGTATFMILGAICTRRCPFCDVAHGRPLKPDAEEPVKLAQTIRDMKLKYVVITSVDRDDLRDGGAQHFADCIREIRKLNPDIKIETLVPDFRGRIDAALDILSTEPPDVFNHNLETAPMHYRKARPGANYQWSLDLLKRFKERHPNVPTKSGLMMGLGETNEEIAQVLRDLRAHNVEMLTLGQYLQPSKFHLPVERYVPPAEFDELKALADELGFTHAACGPLVRSSYHADLQAQGKEVK.

Positions 68, 73, 79, 94, 98, 101, and 308 each coordinate [4Fe-4S] cluster. The Radical SAM core domain maps to 80–297 (FNHGTATFMI…KALADELGFT (218 aa)).

It belongs to the radical SAM superfamily. Lipoyl synthase family. [4Fe-4S] cluster serves as cofactor.

It is found in the cytoplasm. It carries out the reaction [[Fe-S] cluster scaffold protein carrying a second [4Fe-4S](2+) cluster] + N(6)-octanoyl-L-lysyl-[protein] + 2 oxidized [2Fe-2S]-[ferredoxin] + 2 S-adenosyl-L-methionine + 4 H(+) = [[Fe-S] cluster scaffold protein] + N(6)-[(R)-dihydrolipoyl]-L-lysyl-[protein] + 4 Fe(3+) + 2 hydrogen sulfide + 2 5'-deoxyadenosine + 2 L-methionine + 2 reduced [2Fe-2S]-[ferredoxin]. It functions in the pathway protein modification; protein lipoylation via endogenous pathway; protein N(6)-(lipoyl)lysine from octanoyl-[acyl-carrier-protein]: step 2/2. Its function is as follows. Catalyzes the radical-mediated insertion of two sulfur atoms into the C-6 and C-8 positions of the octanoyl moiety bound to the lipoyl domains of lipoate-dependent enzymes, thereby converting the octanoylated domains into lipoylated derivatives. This is Lipoyl synthase from Shewanella baltica (strain OS223).